The following is a 321-amino-acid chain: p-hydroxybenzoic acid efflux pump subunit AaeA (321 aa).

Residues 22–42 (VVITLVIVLCAIVAIFRVWAF) form a helical membrane-spanning segment.

The protein belongs to the membrane fusion protein (MFP) (TC 8.A.1) family.

The protein resides in the cell inner membrane. Its function is as follows. Forms an efflux pump with AaeB. The chain is p-hydroxybenzoic acid efflux pump subunit AaeA from Pectobacterium atrosepticum (strain SCRI 1043 / ATCC BAA-672) (Erwinia carotovora subsp. atroseptica).